Reading from the N-terminus, the 679-residue chain is Protein hook (679 aa).

In terms of domain architecture, Calponin-homology (CH) spans 6–123; it reads NEMYYSLLEW…RLLQLVLGCA (118 aa). 2 coiled-coil regions span residues 135–437 and 480–574; these read EIMC…LKCG and QTAL…QEIL.

Belongs to the hook family. In terms of assembly, homodimer. Interacts with microtubules via its N-terminus.

It is found in the cytoplasm. It localises to the cytoskeleton. The protein localises to the endosome. The protein resides in the synapse. Its function is as follows. Involved in endocytic trafficking by stabilizing organelles of the endocytic pathway. Probably acts as a cytoskeletal linker protein required to tether endosome vesicles to the cytoskeleton. Involved in modulation of endocytosis at stages required for down-regulation of membrane proteins that control synapse size. Not involved in synaptic vesicle recycling. Required in R7 cells for boss endocytosis into multivesicular bodies (MVBs). Has a role in regulating adult longevity. The chain is Protein hook from Drosophila erecta (Fruit fly).